Here is a 103-residue protein sequence, read N- to C-terminus: Integration host factor subunit alpha (103 aa).

Residues 50–72 (GNFNLRDKGERPGRNPKTGEEIP) are disordered. Residues 54 to 69 (LRDKGERPGRNPKTGE) are compositionally biased toward basic and acidic residues.

It belongs to the bacterial histone-like protein family. In terms of assembly, heterodimer of an alpha and a beta chain.

This protein is one of the two subunits of integration host factor, a specific DNA-binding protein that functions in genetic recombination as well as in transcriptional and translational control. The polypeptide is Integration host factor subunit alpha (Coxiella burnetii (strain CbuK_Q154) (Coxiella burnetii (strain Q154))).